A 34-amino-acid chain; its full sequence is Photosystem I reaction center subunit XII (34 aa).

Residues 10–32 traverse the membrane as a helical segment; the sequence is IYIALVVAAHAAILALRLSVSLY.

The protein belongs to the PsaM family.

Its subcellular location is the cellular thylakoid membrane. This chain is Photosystem I reaction center subunit XII, found in Synechococcus sp. (strain RCC307).